We begin with the raw amino-acid sequence, 82 residues long: MVFLLCFFLVADVSYGINKDCLLPMDVGRCRARHPRYYYNSSSKRCEKFIYGGCRGNANNFITKKECEKVCGVRSRDSPKEN.

Residues 1 to 16 (MVFLLCFFLVADVSYG) form the signal peptide. The BPTI/Kunitz inhibitor domain occupies 21–71 (CLLPMDVGRCRARHPRYYYNSSSKRCEKFIYGGCRGNANNFITKKECEKVC). 3 cysteine pairs are disulfide-bonded: Cys-21/Cys-71, Cys-30/Cys-54, and Cys-46/Cys-67. A propeptide spanning residues 76–82 (RDSPKEN) is cleaved from the precursor.

The protein belongs to the venom Kunitz-type family. Sea anemone type 2 potassium channel toxin subfamily.

The protein localises to the secreted. Its subcellular location is the nematocyst. In terms of biological role, dual-function toxin that inhibits both the serine protease trypsin and voltage-gated potassium channels Kv1.2/KCNA2. The protein is U-actitoxin-Avd3k of Anemonia viridis (Snakelocks anemone).